Reading from the N-terminus, the 82-residue chain is MNRLMILVFAAVILALASADEDVDIAKRGVPCLCVSDGPRPRGNNLSGIMWMKTGGYGGNGCPKGWHFCGKSRGFFSDCCKR.

Residues 1 to 19 form the signal peptide; the sequence is MNRLMILVFAAVILALASA. A propeptide spanning residues 20–26 is cleaved from the precursor; the sequence is DEDVDIA. Cystine bridges form between Cys-32/Cys-79, Cys-34/Cys-69, and Cys-62/Cys-80.

Belongs to the sea anemone sodium channel inhibitory toxin family. Type I subfamily.

The protein localises to the secreted. It is found in the nematocyst. In terms of biological role, binds specifically to voltage-gated sodium channels (Nav), thereby delaying their inactivation during signal transduction. Causes death to crabs. The sequence is that of Delta-actitoxin-Aeq2b 1 from Actinia equina (Beadlet anemone).